The primary structure comprises 260 residues: Ubiquinone/menaquinone biosynthesis C-methyltransferase UbiE (260 aa).

S-adenosyl-L-methionine-binding positions include Thr83, Asp104, and 132 to 133; that span reads NA.

Belongs to the class I-like SAM-binding methyltransferase superfamily. MenG/UbiE family.

It carries out the reaction a 2-demethylmenaquinol + S-adenosyl-L-methionine = a menaquinol + S-adenosyl-L-homocysteine + H(+). It catalyses the reaction a 2-methoxy-6-(all-trans-polyprenyl)benzene-1,4-diol + S-adenosyl-L-methionine = a 5-methoxy-2-methyl-3-(all-trans-polyprenyl)benzene-1,4-diol + S-adenosyl-L-homocysteine + H(+). It functions in the pathway quinol/quinone metabolism; menaquinone biosynthesis; menaquinol from 1,4-dihydroxy-2-naphthoate: step 2/2. It participates in cofactor biosynthesis; ubiquinone biosynthesis. Functionally, methyltransferase required for the conversion of demethylmenaquinol (DMKH2) to menaquinol (MKH2) and the conversion of 2-polyprenyl-6-methoxy-1,4-benzoquinol (DDMQH2) to 2-polyprenyl-3-methyl-6-methoxy-1,4-benzoquinol (DMQH2). This Bartonella quintana (strain Toulouse) (Rochalimaea quintana) protein is Ubiquinone/menaquinone biosynthesis C-methyltransferase UbiE.